A 346-amino-acid polypeptide reads, in one-letter code: [LysW]-lysine/[LysW]-ornithine hydrolase (346 aa).

Residue histidine 68 coordinates Zn(2+). Aspartate 70 is a catalytic residue. Residue aspartate 92 participates in Zn(2+) binding. Glutamate 122 serves as the catalytic Proton acceptor. Zn(2+) is bound by residues glutamate 123, glutamate 146, and histidine 317.

This sequence belongs to the peptidase M20A family. LysK subfamily. Zn(2+) is required as a cofactor. The cofactor is Co(2+).

Its subcellular location is the cytoplasm. The catalysed reaction is [amino-group carrier protein]-C-terminal-gamma-(L-lysyl)-L-glutamate + H2O = [amino-group carrier protein]-C-terminal-L-glutamate + L-lysine. It carries out the reaction [amino-group carrier protein]-C-terminal-gamma-(L-ornithyl)-L-glutamate + H2O = [amino-group carrier protein]-C-terminal-L-glutamate + L-ornithine. Its pathway is amino-acid biosynthesis; L-lysine biosynthesis via AAA pathway; L-lysine from L-alpha-aminoadipate (Thermus route): step 5/5. It participates in amino-acid biosynthesis; L-arginine biosynthesis. Its function is as follows. Catalyzes the release of L-lysine from [LysW]-gamma-L-lysine and the release of L-ornithine from [LysW]-L-ornithine. This is [LysW]-lysine/[LysW]-ornithine hydrolase from Saccharolobus islandicus (strain Y.N.15.51 / Yellowstone #2) (Sulfolobus islandicus).